The primary structure comprises 117 residues: DNA-directed RNA polymerase subunit omega (117 aa).

This sequence belongs to the RNA polymerase subunit omega family. The RNAP catalytic core consists of 2 alpha, 1 beta, 1 beta' and 1 omega subunit. When a sigma factor is associated with the core the holoenzyme is formed, which can initiate transcription.

It carries out the reaction RNA(n) + a ribonucleoside 5'-triphosphate = RNA(n+1) + diphosphate. Its function is as follows. Promotes RNA polymerase assembly. Latches the N- and C-terminal regions of the beta' subunit thereby facilitating its interaction with the beta and alpha subunits. This is DNA-directed RNA polymerase subunit omega from Jannaschia sp. (strain CCS1).